The sequence spans 802 residues: Elongation factor G, mitochondrial (802 aa).

The transit peptide at 1 to 24 (MRYPSLARLPRRALSGLARAPVRL) directs the protein to the mitochondrion. Residues 100–387 (SRVRNIGIAA…GVIDYLPNPS (288 aa)) form the tr-type G domain. GTP-binding positions include 109–116 (AHIDSGKT), 185–189 (DTPGH), and 239–242 (NKMD).

This sequence belongs to the TRAFAC class translation factor GTPase superfamily. Classic translation factor GTPase family. EF-G/EF-2 subfamily.

Its subcellular location is the mitochondrion. Its pathway is protein biosynthesis; polypeptide chain elongation. Mitochondrial GTPase that catalyzes the GTP-dependent ribosomal translocation step during translation elongation. During this step, the ribosome changes from the pre-translocational (PRE) to the post-translocational (POST) state as the newly formed A-site-bound peptidyl-tRNA and P-site-bound deacylated tRNA move to the P and E sites, respectively. Catalyzes the coordinated movement of the two tRNA molecules, the mRNA and conformational changes in the ribosome. This chain is Elongation factor G, mitochondrial (mef1), found in Aspergillus terreus (strain NIH 2624 / FGSC A1156).